The sequence spans 608 residues: 2',5'-phosphodiesterase 12 (608 aa).

The transit peptide at 1 to 16 (MWRLPGRAALRGVRSV) directs the protein to the mitochondrion. A disordered region spans residues 91 to 111 (AKKSRKNRAHSSGGAACAATG). The span at 100–111 (HSSGGAACAATG) shows a compositional bias: low complexity. The residue at position 216 (serine 216) is a Phosphoserine. Mg(2+) contacts are provided by glutamate 350, aspartate 495, and asparagine 497. The active-site Proton donor/acceptor is the aspartate 495.

It belongs to the CCR4/nocturin family. Mg(2+) is required as a cofactor.

It is found in the mitochondrion matrix. It carries out the reaction Exonucleolytic cleavage of poly(A) to 5'-AMP.. Enzyme that cleaves 2',5'-phosphodiester bond linking adenosines of the 5'-triphosphorylated oligoadenylates, triphosphorylated oligoadenylates referred as 2-5A modulates the 2-5A system. Degrades triphosphorylated 2-5A to produce AMP and ATP. Also cleaves 3',5'-phosphodiester bond of oligoadenylates. Plays a role as a negative regulator of the 2-5A system that is one of the major pathways for antiviral and antitumor functions induced by interferons (IFNs). Suppression of this enzyme increases cellular 2-5A levels and decreases viral replication in cultured small-airway epithelial cells. This chain is 2',5'-phosphodiesterase 12 (Pde12), found in Rattus norvegicus (Rat).